The primary structure comprises 108 residues: TYRO protein tyrosine kinase-binding protein (108 aa).

The first 25 residues, 1–25 (MEGLRPSDRLLSLLLTVGGLSLVLA), serve as a signal peptide directing secretion. At 26-36 (QSECNCSSVSP) the chain is on the extracellular side. A helical transmembrane segment spans residues 37-57 (GVLAGIVLGDLMLTLLIALAV). Asp-46 lines the Ca(2+) pocket. The Cytoplasmic portion of the chain corresponds to 58–108 (YYLGRLVPRGRGATEVTRKQHIPETESPYQELQGQRTDVYSDLNTQRPYYK). The disordered stretch occupies residues 71–108 (TEVTRKQHIPETESPYQELQGQRTDVYSDLNTQRPYYK). One can recognise an ITAM domain in the interval 75–103 (RKQHIPETESPYQELQGQRTDVYSDLNTQ). Residues 84–108 (SPYQELQGQRTDVYSDLNTQRPYYK) are compositionally biased toward polar residues. Residues Tyr-86 and Tyr-97 each carry the phosphotyrosine modification.

It belongs to the TYROBP family. Homodimer; disulfide-linked. Homotrimer; disulfide-linked. Homotetramer; disulfide-linked. Homotrimers and homotetramers form when low levels of partner receptors are available and is competitive with assembly with interacting receptors. They may represent alternative oligomerization states or may be intermediates in the receptor assembly process. Binding of a metal cation aids in homooligomerization through coordination of the metal ion by the subunits of the oligomer. Interacts with TREM1. Interacts with TREM2. Interacts with CLECSF5. Interacts with CD300LB and CD300C2. Interacts with CD300E. Interacts (via ITAM domain) with SYK (via SH2 domains); activates SYK mediating neutrophils and macrophages integrin-mediated activation. Interacts with KLRC2. Interacts with CD300H. Interacts with KLRD1. Interacts with SIGLEC1. Post-translationally, following ligand binding by associated receptors, tyrosine phosphorylated in the ITAM domain which leads to activation of additional tyrosine kinases and subsequent cell activation.

The protein localises to the cell membrane. Its function is as follows. Adapter protein which non-covalently associates with activating receptors found on the surface of a variety of immune cells to mediate signaling and cell activation following ligand binding by the receptors. TYROBP is tyrosine-phosphorylated in the ITAM domain following ligand binding by the associated receptors which leads to activation of additional tyrosine kinases and subsequent cell activation. Also has an inhibitory role in some cells. Non-covalently associates with activating receptors of the CD300 family to mediate cell activation. Also mediates cell activation through association with activating receptors of the CD200R family. Required for neutrophil activation mediated by integrin. Required for the activation of myeloid cells mediated by the CLEC5A/MDL1 receptor. Associates with natural killer (NK) cell receptors such as the KLRD1/KLRC2 heterodimer to mediate NK cell activation. Associates with TREM1 to mediate activation of neutrophils and monocytes. Associates with TREM2 on monocyte-derived dendritic cells to mediate up-regulation of chemokine receptor CCR7 and dendritic cell maturation and survival. Association with TREM2 mediates cytokine-induced formation of multinucleated giant cells which are formed by the fusion of macrophages. Stabilizes the TREM2 C-terminal fragment (TREM2-CTF) produced by TREM2 ectodomain shedding which suppresses the release of pro-inflammatory cytokines. In microglia, required with TREM2 for phagocytosis of apoptotic neurons. Required with ITGAM/CD11B in microglia to control production of microglial superoxide ions which promote the neuronal apoptosis that occurs during brain development. Promotes pro-inflammatory responses in microglia following nerve injury which accelerates degeneration of injured neurons. Positively regulates the expression of the IRAK3/IRAK-M kinase and IL10 production by liver dendritic cells and inhibits their T cell allosimulatory ability. Negatively regulates B cell proliferation. Required for CSF1-mediated osteoclast cytoskeletal organization. Positively regulates multinucleation during osteoclast development. The protein is TYRO protein tyrosine kinase-binding protein of Bos taurus (Bovine).